A 215-amino-acid polypeptide reads, in one-letter code: Cytochrome b6 (215 aa).

A helical transmembrane segment spans residues 32-52; it reads IFYCLGGITLTCFLVQVATGF. Cysteine 35 is a heme c binding site. Heme b-binding residues include histidine 86 and histidine 100. 3 consecutive transmembrane segments (helical) span residues 90–110, 116–136, and 186–206; these read ASMM…TGGF, LTWV…VTGY, and LHTF…FPMI. 2 residues coordinate heme b: histidine 187 and histidine 202.

This sequence belongs to the cytochrome b family. PetB subfamily. In terms of assembly, the 4 large subunits of the cytochrome b6-f complex are cytochrome b6, subunit IV (17 kDa polypeptide, PetD), cytochrome f and the Rieske protein, while the 4 small subunits are PetG, PetL, PetM and PetN. The complex functions as a dimer. Heme b serves as cofactor. Heme c is required as a cofactor.

It is found in the plastid. It localises to the chloroplast thylakoid membrane. Functionally, component of the cytochrome b6-f complex, which mediates electron transfer between photosystem II (PSII) and photosystem I (PSI), cyclic electron flow around PSI, and state transitions. The protein is Cytochrome b6 of Daucus carota (Wild carrot).